The chain runs to 86 residues: Kappa-theraphotoxin-Cg1a 5 (86 aa).

The first 21 residues, 1–21 (MKVSVLITLAVLGVMFVWTSA), serve as a signal peptide directing secretion. Residues 22–50 (AELEERGSDQRDSPAWLKSMERIFQSEER) constitute a propeptide that is removed on maturation. 3 cysteine pairs are disulfide-bonded: Cys-52-Cys-66, Cys-59-Cys-71, and Cys-65-Cys-78. Phenylalanine amide is present on Phe-84.

The protein belongs to the neurotoxin 10 (Hwtx-1) family. 28 (Jztx-11) subfamily. In terms of tissue distribution, expressed by the venom gland.

Its subcellular location is the secreted. Functionally, this toxin acts as a voltage-dependent gating-modifier. It inhibits the sodium conductance (IC(50)=124 nM) and slows the fast inactivation (EC(50)=1180 nM) of Nav1.5/SCN5A. It significantly shifts the activation to more depolarized voltages and decreases the deactivation of Nav1.5 currents upon extreme depolarization, but only slightly affects voltage-dependence of steady-state inactivation. In addition, this toxin causes an approximately five-fold decrease in the rate of recovery from inactivation and an approximately 1.9-fold reduction in the closed-state inactivation rate. This toxin integrates the functions of site 3 toxins (alpha-scorpion toxins) with site 4 toxins (beta-scorpion and spider toxins) by targeting multiple sites on Nav1.5. Also shows inhibition of voltage-gated potassium channels (5 uM completely inhibits Kv2.1/KCNB1, whereas 5 uM moderately inhibits Kv4.2/KCND2 Kv4.1/KCND1 channels). The protein is Kappa-theraphotoxin-Cg1a 5 of Chilobrachys guangxiensis (Chinese earth tiger tarantula).